The chain runs to 278 residues: Small ribosomal subunit biogenesis GTPase RsgA (278 aa).

One can recognise a CP-type G domain in the interval 62–218 (KNTLVRPKVV…ICDTPGFNVI (157 aa)). GTP-binding positions include 112–115 (TKND) and 162–170 (GQSGVGKSS). Zn(2+) contacts are provided by Cys241, Cys246, His248, and Cys254.

The protein belongs to the TRAFAC class YlqF/YawG GTPase family. RsgA subfamily. In terms of assembly, monomer. Associates with 30S ribosomal subunit, binds 16S rRNA. It depends on Zn(2+) as a cofactor.

It is found in the cytoplasm. Functionally, one of several proteins that assist in the late maturation steps of the functional core of the 30S ribosomal subunit. Helps release RbfA from mature subunits. May play a role in the assembly of ribosomal proteins into the subunit. Circularly permuted GTPase that catalyzes slow GTP hydrolysis, GTPase activity is stimulated by the 30S ribosomal subunit. This Mycoplasma pneumoniae (strain ATCC 29342 / M129 / Subtype 1) (Mycoplasmoides pneumoniae) protein is Small ribosomal subunit biogenesis GTPase RsgA.